A 506-amino-acid chain; its full sequence is NAD(P)H-quinone oxidoreductase subunit 2 (506 aa).

The next 13 helical transmembrane spans lie at 14 to 34 (AIIPEAFILLGIVGTLLVDLA), 42 to 62 (WAPSICYLSIGSSLLSLTLQW), 79 to 99 (LAIAFRAIIALSTLVSLLISW), 108 to 128 (PIGEFAAIVLSATLGAMLLCG), 132 to 152 (LISVFISLETLSVASYLLSGY), 167 to 187 (LLVGSAAAAVYLYGSSFLYGL), 206 to 226 (FITSLALVFVLSTVAFKIAAV), 240 to 260 (PTPVVAFLSVGSKTAGFAFAI), 276 to 296 (LLFTILAILSMALGNVVALAQ), 302 to 322 (MLAYSSIGQAGFVMIGIVSGT), 330 to 350 (VLYLAAYLFMNLGAFSCVILF), 374 to 394 (LGLSLCLLSLGGLPPMLGFFG), and 409 to 429 (LLVIVGLVTSVISIYYYISVI).

The protein belongs to the complex I subunit 2 family. NDH-1 can be composed of about 15 different subunits; different subcomplexes with different compositions have been identified which probably have different functions.

The protein localises to the cellular thylakoid membrane. It carries out the reaction a plastoquinone + NADH + (n+1) H(+)(in) = a plastoquinol + NAD(+) + n H(+)(out). It catalyses the reaction a plastoquinone + NADPH + (n+1) H(+)(in) = a plastoquinol + NADP(+) + n H(+)(out). Functionally, NDH-1 shuttles electrons from an unknown electron donor, via FMN and iron-sulfur (Fe-S) centers, to quinones in the respiratory and/or the photosynthetic chain. The immediate electron acceptor for the enzyme in this species is believed to be plastoquinone. Couples the redox reaction to proton translocation, and thus conserves the redox energy in a proton gradient. Cyanobacterial NDH-1 also plays a role in inorganic carbon-concentration. The polypeptide is NAD(P)H-quinone oxidoreductase subunit 2 (Prochlorococcus marinus (strain MIT 9301)).